Here is a 163-residue protein sequence, read N- to C-terminus: uncharacterized protein (163 aa).

This is an uncharacterized protein from Mycoplasma pneumoniae (strain ATCC 29342 / M129 / Subtype 1) (Mycoplasmoides pneumoniae).